A 158-amino-acid polypeptide reads, in one-letter code: Ribosome-binding factor A (158 aa).

The tract at residues 114 to 158 (AKDAEVRQVSTGAQYAGDADPYRKPEDEDEETDGSSEKNEGPASA) is disordered. The segment covering 148-158 (SSEKNEGPASA) has biased composition (basic and acidic residues).

It belongs to the RbfA family. In terms of assembly, monomer. Binds 30S ribosomal subunits, but not 50S ribosomal subunits or 70S ribosomes.

The protein resides in the cytoplasm. In terms of biological role, one of several proteins that assist in the late maturation steps of the functional core of the 30S ribosomal subunit. Associates with free 30S ribosomal subunits (but not with 30S subunits that are part of 70S ribosomes or polysomes). Required for efficient processing of 16S rRNA. May interact with the 5'-terminal helix region of 16S rRNA. This is Ribosome-binding factor A from Streptomyces griseus subsp. griseus (strain JCM 4626 / CBS 651.72 / NBRC 13350 / KCC S-0626 / ISP 5235).